The following is a 22-amino-acid chain: Peroxidase 5 (22 aa).

Belongs to the peroxidase family. Classical plant (class III) peroxidase subfamily. Requires heme b as cofactor. It depends on Ca(2+) as a cofactor.

It localises to the secreted. It is found in the cell wall. The enzyme catalyses 2 a phenolic donor + H2O2 = 2 a phenolic radical donor + 2 H2O. Functionally, removal of H(2)O(2), oxidation of toxic reductants, biosynthesis and degradation of lignin, suberization, auxin catabolism, response to environmental stresses such as wounding, pathogen attack and oxidative stress. These functions might be dependent on each isozyme/isoform in each plant tissue. This chain is Peroxidase 5, found in Cycas revoluta (Sago palm).